A 968-amino-acid chain; its full sequence is RNA polymerase-associated protein RapA (968 aa).

One can recognise a Helicase ATP-binding domain in the interval 164–334 (DVGRRHAPRV…FARLRLLDPN (171 aa)). 177–184 (DEVGLGKT) contacts ATP. Residues 280-283 (DEAH) carry the DEAH box motif. The Helicase C-terminal domain maps to 490–662 (RVEWLMGYLT…YLASPDQTEG (173 aa)).

This sequence belongs to the SNF2/RAD54 helicase family. RapA subfamily. In terms of assembly, interacts with the RNAP. Has a higher affinity for the core RNAP than for the holoenzyme. Its ATPase activity is stimulated by binding to RNAP.

In terms of biological role, transcription regulator that activates transcription by stimulating RNA polymerase (RNAP) recycling in case of stress conditions such as supercoiled DNA or high salt concentrations. Probably acts by releasing the RNAP, when it is trapped or immobilized on tightly supercoiled DNA. Does not activate transcription on linear DNA. Probably not involved in DNA repair. This Escherichia coli (strain 55989 / EAEC) protein is RNA polymerase-associated protein RapA.